The following is a 459-amino-acid chain: Proton-coupled folate transporter (459 aa).

M1 is modified (N-acetylmethionine). Topologically, residues M1–V25 are cytoplasmic. Residues E26 to T44 traverse the membrane as a helical segment. The Extracellular portion of the chain corresponds to Q45 to T82. Residues N58 and N68 are each glycosylated (N-linked (GlcNAc...) asparagine). C66 and C298 are disulfide-bonded. The helical transmembrane segment at S83–S108 threads the bilayer. Residues D109–G112 lie on the Cytoplasmic side of the membrane. Residues R113–V135 form a helical membrane-spanning segment. Residues Q136–H140 are Extracellular-facing. Residues I141 to L154 form a helical membrane-spanning segment. Topologically, residues G155–R177 are cytoplasmic. H(+)-binding residues include D156 and E185. The helical transmembrane segment at T178–L203 threads the bilayer. At Q204 to Y208 the chain is on the extracellular side. A helical membrane pass occupies residues V209–A227. Residues F228 to H266 are Cytoplasmic-facing. Residues L267–T289 traverse the membrane as a helical segment. H281 contributes to the H(+) binding site. Residues L290–R302 lie on the Extracellular side of the membrane. The chain crosses the membrane as a helical span at residues L303–L325. Residues Q326–D331 are Cytoplasmic-facing. A helical transmembrane segment spans residues T332 to F351. Residues A352–T355 lie on the Extracellular side of the membrane. The chain crosses the membrane as a helical span at residues P356–R376. The Cytoplasmic segment spans residues A377 to Q388. Residues G389 to Y414 form a helical membrane-spanning segment. The Extracellular portion of the chain corresponds to P415–K422. Residues G423–G441 form a helical membrane-spanning segment. At I442 to P459 the chain is on the cytoplasmic side. S458 carries the phosphoserine modification.

Belongs to the major facilitator superfamily. SLC46A family. Monomer. As to expression, expressed in retina and retinal pigment epithelium.

It localises to the cell membrane. The protein localises to the apical cell membrane. Its subcellular location is the basolateral cell membrane. It is found in the endosome membrane. The protein resides in the cytoplasm. It catalyses the reaction folate(in) + H(+)(in) = folate(out) + H(+)(out). The catalysed reaction is (6S)-5-methyl-5,6,7,8-tetrahydrofolate(in) + H(+)(in) = (6S)-5-methyl-5,6,7,8-tetrahydrofolate(out) + H(+)(out). It carries out the reaction methotrexate(in) + H(+)(in) = methotrexate(out) + H(+)(out). The enzyme catalyses pemetrexed(in) + H(+)(in) = pemetrexed(out) + H(+)(out). Its function is as follows. Proton-coupled folate symporter that mediates folate absorption using an H(+) gradient as a driving force. Involved in the intestinal absorption of folates at the brush-border membrane of the proximal jejunum, and the transport from blood to cerebrospinal fluid across the choroid plexus. Functions at acidic pH via alternate outward- and inward-open conformation states. Protonation of residues in the outward open state primes the protein for transport. Binding of folate promotes breaking of salt bridge network and subsequent closure of the extracellular gate, leading to the inward-open state and release of protons and folate. Also able to transport antifolate drugs, such as methotrexate and pemetrexed. Involved in FOLR1-mediated endocytosis by serving as a route of export of folates from acidified endosomes. Also acts as a lower-affinity, pH-independent heme carrier protein and constitutes the main importer of heme in the intestine. Imports heme in the retina and retinal pigment epithelium, in neurons of the hippocampus, in hepatocytes and in the renal epithelial cells. Hence, participates in the trafficking of heme and increases intracellular iron content. The protein is Proton-coupled folate transporter of Bos taurus (Bovine).